Here is a 783-residue protein sequence, read N- to C-terminus: Na(+)/H(+) exchanger protein 7 (783 aa).

Residues 1 to 18 form a helical membrane-spanning segment; the sequence is MWIKLLFFFTTLLVSTSG. The Extracellular segment spans residues 19-108; that stretch reads LGDDGITALL…WHWDYVKNEL (90 aa). Residues 109–129 form a helical membrane-spanning segment; the sequence is VLTLFFIVIGLFKLVYHHTFV. Residues 130–132 lie on the Cytoplasmic side of the membrane; that stretch reads TRK. A helical transmembrane segment spans residues 133-153; the sequence is ILPESCCLIFIGIAIGFFFVG. At 154–159 the chain is on the extracellular side; that stretch reads DATHAS. Residues 160 to 180 form a helical membrane-spanning segment; sequence IKFLEFKSKVFFFYLLPPIIL. Topologically, residues 181 to 206 are cytoplasmic; it reads ESAYSLKDRAFIENIGTILLYAVVGT. The chain crosses the membrane as a helical span at residues 207–227; sequence ILNIVLLAAALLILIWVGIMG. Over 228–235 the chain is Extracellular; the sequence is KYNLSVMD. Residues 236–256 traverse the membrane as a helical segment; that stretch reads ILTFASLVAAVDPVAVLAVFQ. Residues 257-262 lie on the Cytoplasmic side of the membrane; that stretch reads EVGVNK. The helical transmembrane segment at 263-283 threads the bilayer; that stretch reads MLYFMVFGESLFNDAVTIVCY. Residues 284 to 299 are Extracellular-facing; sequence NLAIEFQTLPDFTWYH. A helical membrane pass occupies residues 300 to 320; that stretch reads GFLGLLSFLCVSIGGLIIGLI. The Cytoplasmic portion of the chain corresponds to 321–350; sequence CGAISSFVTKFTTDVRVVEPVVLFGMAYLA. A helical transmembrane segment spans residues 351-371; it reads YLGSEMFHFSGIIALIACGLF. The Extracellular portion of the chain corresponds to 372–390; that stretch reads QTHYACCNISYKSFTSVMY. N379 carries an N-linked (GlcNAc...) asparagine glycan. An intramembrane region (helical) is located at residues 391–411; it reads ITKVCSTLCESLIFIILGVML. The Extracellular segment spans residues 412-424; that stretch reads VNEREWFWTDWHP. Residues 425-445 form a helical membrane-spanning segment; the sequence is VFSAVSVVLCVVVRFGVTFFL. Topologically, residues 446–464 are cytoplasmic; that stretch reads TYFVNQFTGGVRHISFQEQ. Residues 465-485 form a helical membrane-spanning segment; sequence FIMSYGGLRGAVSFSLVFMIS. Residues 486 to 492 lie on the Extracellular side of the membrane; the sequence is ANPDVKN. The chain crosses the membrane as a helical span at residues 493 to 513; that stretch reads TMLGATYAVILFTNIIQGSTI. At 514–783 the chain is on the cytoplasmic side; that stretch reads KLFVKWLNIR…TITESEETSF (270 aa). Positions 649 to 702 form a coiled coil; that stretch reads DNEDADQRANELIKDVSSIRQLMHNPFEDCYLDRNLTHEEEKEQARLKMKKTRA. The tract at residues 745–783 is disordered; the sequence is RPSTSTRVSVEDEEQGLTMKEMEEEHPLMTITESEETSF.

It belongs to the monovalent cation:proton antiporter 1 (CPA1) transporter (TC 2.A.36) family. Interacts (via C-terminus) with cmd-1. Detected in the posterior cells of the intestine.

It is found in the basolateral cell membrane. Its function is as follows. Na+/H+ exchanger which mediates the transient acidification of the coelomic space and plays a role in contraction of posterior body muscles during defecation. Probably by regulating the defecation motor program, required for fatty acid uptake by intestinal cells. The chain is Na(+)/H(+) exchanger protein 7 from Caenorhabditis elegans.